The sequence spans 208 residues: Large ribosomal subunit protein uL4 (208 aa).

The interval 58-77 is disordered; it reads RGGGRKPWRQKGTGRARQGS. Residues 60–71 show a composition bias toward basic residues; that stretch reads GGRKPWRQKGTG.

Belongs to the universal ribosomal protein uL4 family. In terms of assembly, part of the 50S ribosomal subunit.

Functionally, one of the primary rRNA binding proteins, this protein initially binds near the 5'-end of the 23S rRNA. It is important during the early stages of 50S assembly. It makes multiple contacts with different domains of the 23S rRNA in the assembled 50S subunit and ribosome. In terms of biological role, forms part of the polypeptide exit tunnel. In Caldicellulosiruptor bescii (strain ATCC BAA-1888 / DSM 6725 / KCTC 15123 / Z-1320) (Anaerocellum thermophilum), this protein is Large ribosomal subunit protein uL4.